We begin with the raw amino-acid sequence, 464 residues long: Siroheme synthase (464 aa).

The interval 1 to 203 is precorrin-2 dehydrogenase /sirohydrochlorin ferrochelatase; that stretch reads MEFLPLFHNL…GQGAEAERLL (203 aa). NAD(+) contacts are provided by residues 22–23 and 43–44; these read EI and PE. The residue at position 128 (S128) is a Phosphoserine. Positions 216-464 are uroporphyrinogen-III C-methyltransferase; that stretch reads GEVYLVGAGP…AWFEGAQATV (249 aa). P225 contacts S-adenosyl-L-methionine. Residue D248 is the Proton acceptor of the active site. The active-site Proton donor is K270. S-adenosyl-L-methionine is bound by residues 301–303, I306, 331–332, M383, and G412; these read GGD and TA.

It in the N-terminal section; belongs to the precorrin-2 dehydrogenase / sirohydrochlorin ferrochelatase family. In the C-terminal section; belongs to the precorrin methyltransferase family.

It carries out the reaction uroporphyrinogen III + 2 S-adenosyl-L-methionine = precorrin-2 + 2 S-adenosyl-L-homocysteine + H(+). The enzyme catalyses precorrin-2 + NAD(+) = sirohydrochlorin + NADH + 2 H(+). It catalyses the reaction siroheme + 2 H(+) = sirohydrochlorin + Fe(2+). It participates in cofactor biosynthesis; adenosylcobalamin biosynthesis; precorrin-2 from uroporphyrinogen III: step 1/1. Its pathway is cofactor biosynthesis; adenosylcobalamin biosynthesis; sirohydrochlorin from precorrin-2: step 1/1. The protein operates within porphyrin-containing compound metabolism; siroheme biosynthesis; precorrin-2 from uroporphyrinogen III: step 1/1. It functions in the pathway porphyrin-containing compound metabolism; siroheme biosynthesis; siroheme from sirohydrochlorin: step 1/1. It participates in porphyrin-containing compound metabolism; siroheme biosynthesis; sirohydrochlorin from precorrin-2: step 1/1. Its function is as follows. Multifunctional enzyme that catalyzes the SAM-dependent methylations of uroporphyrinogen III at position C-2 and C-7 to form precorrin-2 via precorrin-1. Then it catalyzes the NAD-dependent ring dehydrogenation of precorrin-2 to yield sirohydrochlorin. Finally, it catalyzes the ferrochelation of sirohydrochlorin to yield siroheme. This Pseudomonas savastanoi pv. phaseolicola (strain 1448A / Race 6) (Pseudomonas syringae pv. phaseolicola (strain 1448A / Race 6)) protein is Siroheme synthase.